We begin with the raw amino-acid sequence, 132 residues long: Small ribosomal subunit protein uS11 (132 aa).

Residues Met-1 to Arg-16 are compositionally biased toward basic residues. The interval Met-1–Glu-20 is disordered.

It belongs to the universal ribosomal protein uS11 family. Part of the 30S ribosomal subunit. Interacts with proteins S7 and S18. Binds to IF-3.

Located on the platform of the 30S subunit, it bridges several disparate RNA helices of the 16S rRNA. Forms part of the Shine-Dalgarno cleft in the 70S ribosome. In Clostridium botulinum (strain Kyoto / Type A2), this protein is Small ribosomal subunit protein uS11.